Consider the following 155-residue polypeptide: Basic phospholipase A2 PC9 (155 aa).

An N-terminal signal peptide occupies residues methionine 1–alanine 21. Residues isoleucine 22–leucine 27 constitute a propeptide that is removed on maturation. Disulfide bonds link cysteine 38-cysteine 98, cysteine 54-cysteine 144, cysteine 56-cysteine 72, cysteine 71-cysteine 125, cysteine 78-cysteine 118, cysteine 87-cysteine 111, and cysteine 105-cysteine 116. Ca(2+) contacts are provided by tyrosine 55, glycine 57, and glycine 59. The active site involves histidine 75. Aspartate 76 contacts Ca(2+). Aspartate 119 is an active-site residue.

This sequence belongs to the phospholipase A2 family. Group I subfamily. D49 sub-subfamily. The cofactor is Ca(2+). In terms of tissue distribution, expressed by the venom gland.

It localises to the secreted. It carries out the reaction a 1,2-diacyl-sn-glycero-3-phosphocholine + H2O = a 1-acyl-sn-glycero-3-phosphocholine + a fatty acid + H(+). Snake venom phospholipase A2 (PLA2) that inhibits neuromuscular transmission by blocking acetylcholine release from the nerve termini. PLA2 catalyzes the calcium-dependent hydrolysis of the 2-acyl groups in 3-sn-phosphoglycerides. The sequence is that of Basic phospholipase A2 PC9 from Laticauda colubrina (Yellow-lipped sea krait).